Consider the following 232-residue polypeptide: Small ribosomal subunit protein uS5 (232 aa).

The segment at 1–47 (MAAEVTETAQPVETAASTDNNREQREPRRGGRERNPNRDRGNRDADK) is disordered. Over residues 7-19 (ETAQPVETAASTD) the composition is skewed to polar residues. Positions 20–47 (NNREQREPRRGGRERNPNRDRGNRDADK) are enriched in basic and acidic residues. The 64-residue stretch at 50–113 (FLERVVTINR…EEAKKNFFRV (64 aa)) folds into the S5 DRBM domain.

Belongs to the universal ribosomal protein uS5 family. Part of the 30S ribosomal subunit. Contacts proteins S4 and S8.

In terms of biological role, with S4 and S12 plays an important role in translational accuracy. Its function is as follows. Located at the back of the 30S subunit body where it stabilizes the conformation of the head with respect to the body. This chain is Small ribosomal subunit protein uS5, found in Leifsonia xyli subsp. xyli (strain CTCB07).